We begin with the raw amino-acid sequence, 285 residues long: Steroidogenic acute regulatory protein, mitochondrial (285 aa).

Residues 1-61 (MLPATFKLCA…RRSSLLSSPI (61 aa)) constitute a mitochondrion transit peptide. The region spanning 65-278 (TYSEADQCYV…LRDRMASGGG (214 aa)) is the START domain.

As to quaternary structure, may interact with TSPO. In terms of tissue distribution, highly expressed in the testis and at lower levels in the ovary, kidney and head.

The protein resides in the mitochondrion. It catalyses the reaction cholesterol(in) = cholesterol(out). It participates in steroid metabolism; cholesterol metabolism. Its function is as follows. Plays a key role in steroid hormone synthesis by enhancing the metabolism of cholesterol into pregnenolone. Mediates the transfer of cholesterol from the outer mitochondrial membrane to the inner mitochondrial membrane where it is cleaved to pregnenolone. This Danio rerio (Zebrafish) protein is Steroidogenic acute regulatory protein, mitochondrial (star).